A 222-amino-acid chain; its full sequence is N-(5'-phosphoribosyl)anthranilate isomerase (222 aa).

It belongs to the TrpF family.

It catalyses the reaction N-(5-phospho-beta-D-ribosyl)anthranilate = 1-(2-carboxyphenylamino)-1-deoxy-D-ribulose 5-phosphate. It functions in the pathway amino-acid biosynthesis; L-tryptophan biosynthesis; L-tryptophan from chorismate: step 3/5. This chain is N-(5'-phosphoribosyl)anthranilate isomerase, found in Brevibacillus brevis (strain 47 / JCM 6285 / NBRC 100599).